The primary structure comprises 291 residues: Asialoglycoprotein receptor 1 (291 aa).

Residues 1–19 show a composition bias toward basic and acidic residues; the sequence is MTKECQDLQHLDNEESDHH. The disordered stretch occupies residues 1 to 27; sequence MTKECQDLQHLDNEESDHHQLRKGPPP. Residues 1–40 lie on the Cytoplasmic side of the membrane; sequence MTKECQDLQHLDNEESDHHQLRKGPPPSQPLLQRLCSGPR. The Endocytosis signal signature appears at 5-8; that stretch reads CQDL. Ser-16 carries the post-translational modification Phosphoserine. Residue Cys-36 is the site of S-palmitoyl cysteine attachment. A helical; Signal-anchor for type II membrane protein membrane pass occupies residues 41-61; sequence LLLLSLGLSLLLLVVVCVIGS. Residues 61 to 123 are a coiled coil; sequence SQNSQLQKEL…KDLSEDHSSL (63 aa). Residues 62 to 291 lie on the Extracellular side of the membrane; sequence QNSQLQKELR…DKASQEPPLL (230 aa). Asn-79 and Asn-147 each carry an N-linked (GlcNAc...) asparagine glycan. Intrachain disulfides connect Cys-154-Cys-165, Cys-182-Cys-277, and Cys-255-Cys-269. Positions 161-278 constitute a C-type lectin domain; sequence HERSCYWFSR…CQRPYRWVCE (118 aa). 11 residues coordinate Ca(2+): Val-191, Glu-197, Asp-216, Gln-240, Asp-242, Asp-243, Glu-253, Asp-254, Asn-265, Asp-266, and Glu-278. Phosphoserine is present on Ser-285.

In terms of assembly, interacts with LASS2. In terms of processing, phosphorylated on a cytoplasmic Ser residue.

It localises to the membrane. Its function is as follows. Mediates the endocytosis of plasma glycoproteins to which the terminal sialic acid residue on their complex carbohydrate moieties has been removed. The receptor recognizes terminal galactose and N-acetylgalactosamine units. After ligand binding to the receptor, the resulting complex is internalized and transported to a sorting organelle, where receptor and ligand are disassociated. The receptor then returns to the cell membrane surface. The sequence is that of Asialoglycoprotein receptor 1 (ASGR1) from Pongo abelii (Sumatran orangutan).